The sequence spans 212 residues: Orotate phosphoribosyltransferase (212 aa).

5-phospho-alpha-D-ribose 1-diphosphate contacts are provided by residues Arg97, Lys101, His103, and 123–131 (EDLISTGGS). Ser127 contacts orotate.

This sequence belongs to the purine/pyrimidine phosphoribosyltransferase family. PyrE subfamily. Homodimer. Mg(2+) serves as cofactor.

The enzyme catalyses orotidine 5'-phosphate + diphosphate = orotate + 5-phospho-alpha-D-ribose 1-diphosphate. The protein operates within pyrimidine metabolism; UMP biosynthesis via de novo pathway; UMP from orotate: step 1/2. Functionally, catalyzes the transfer of a ribosyl phosphate group from 5-phosphoribose 1-diphosphate to orotate, leading to the formation of orotidine monophosphate (OMP). In Bacteroides thetaiotaomicron (strain ATCC 29148 / DSM 2079 / JCM 5827 / CCUG 10774 / NCTC 10582 / VPI-5482 / E50), this protein is Orotate phosphoribosyltransferase.